Reading from the N-terminus, the 186-residue chain is Dihydrofolate reductase (186 aa).

The DHFR domain occupies 3 to 184 (PLNCIVAVSQ…IKYKFEVYEK (182 aa)). NADP(+)-binding positions include alanine 9 and 15 to 21 (GIGKNGD). 30-35 (EYKYFQ) is a binding site for substrate. Lysine 32 is modified (N6-acetyllysine; alternate). At lysine 32 the chain carries N6-succinyllysine; alternate. 54–56 (RKT) provides a ligand contact to NADP(+). Residue arginine 70 participates in substrate binding. NADP(+)-binding positions include 76 to 78 (SRE) and 116 to 123 (GGSSVYKE). Residue cysteine 162 is modified to Cysteine derivative; partial.

Belongs to the dihydrofolate reductase family. In terms of assembly, homodimer.

Its subcellular location is the mitochondrion. The protein resides in the cytoplasm. The catalysed reaction is (6S)-5,6,7,8-tetrahydrofolate + NADP(+) = 7,8-dihydrofolate + NADPH + H(+). It participates in cofactor biosynthesis; tetrahydrofolate biosynthesis; 5,6,7,8-tetrahydrofolate from 7,8-dihydrofolate: step 1/1. Its function is as follows. Key enzyme in folate metabolism. Contributes to the de novo mitochondrial thymidylate biosynthesis pathway. Catalyzes an essential reaction for de novo glycine and purine synthesis, and for DNA precursor synthesis. Binds its own mRNA and that of DHFR2. The polypeptide is Dihydrofolate reductase (DHFR) (Sus scrofa (Pig)).